The sequence spans 126 residues: Protein ApaG (126 aa).

Residues 2 to 126 (TSLEDSIKVE…FRLAVPGMLH (125 aa)) enclose the ApaG domain.

This chain is Protein ApaG, found in Shewanella sediminis (strain HAW-EB3).